We begin with the raw amino-acid sequence, 90 residues long: YcgL domain-containing protein YE2368 (90 aa).

In terms of domain architecture, YcgL spans 1 to 85; sequence MLCAIYRSPK…PPESLLKMHL (85 aa).

The polypeptide is YcgL domain-containing protein YE2368 (Yersinia enterocolitica serotype O:8 / biotype 1B (strain NCTC 13174 / 8081)).